A 59-amino-acid polypeptide reads, in one-letter code: Embryonic testis differentiation protein (59 aa).

Residues 1 to 28 (MDEKNPEAVPRPPEQNTELVPPKKSKSK) form a disordered region.

In terms of tissue distribution, specifically expressed in testis.

In Mus musculus (Mouse), this protein is Embryonic testis differentiation protein.